A 382-amino-acid polypeptide reads, in one-letter code: Homeobox protein SHOOT MERISTEMLESS (382 aa).

The segment at 26–59 is disordered; the sequence is MMMMMPPIMTSHQHHGHDHQHQQQEHDGYAYQSH. Over residues 44–53 the composition is skewed to basic and acidic residues; that stretch reads HQHQQQEHDG. Residues 262-282 form the ELK domain; the sequence is ELKGQLLRKYSGYLGSLKQEF. Residues 283–346 constitute a DNA-binding region (homeobox; TALE-type); the sequence is MKKRKKGKLP…NQRKRHWKPS (64 aa).

The protein belongs to the TALE/KNOX homeobox family. Forms homodimers. May form heterodimeric complexes with TALE/BELL proteins BEL1, BLH2, BLH3, BLH8/PNF, BLH9/PNY and ATH1. Interacts with CCT8. Binds to MBP2C; this interaction reduces RNA binding capacity. Interacts with FTIP3 and FTIP4. In terms of tissue distribution, expressed in all four types of shoot apical meristems (SAM) i.e. in vegetative, axillary, inflorescence and floral.

It is found in the nucleus. The protein resides in the cell junction. The protein localises to the plasmodesma. Its subcellular location is the cytoplasm. It localises to the endosome. It is found in the cell membrane. Its function is as follows. Required for shoot apical meristem (SAM) formation during embryogenesis. Negatively regulates ASYMMETRIC LEAVES1 (AS1) and ASYMMETRIC LEAVES2 (AS2 or LBD6). Probably binds to the DNA sequence 5'-TGAC-3'. Binds to RNA. The polypeptide is Homeobox protein SHOOT MERISTEMLESS (Arabidopsis thaliana (Mouse-ear cress)).